A 659-amino-acid chain; its full sequence is UvrABC system protein B (659 aa).

Residues 25–182 (QSIENGNRGQ…KKLIEIQYER (158 aa)) enclose the Helicase ATP-binding domain. An ATP-binding site is contributed by 38–45 (GVTGSGKT). Positions 91 to 114 (YYDYYQPEAYVPQTDTFIEKDASI) match the Beta-hairpin motif. The Helicase C-terminal domain occupies 429–582 (QIDDLYGEIQ…QMEYNEEHNI (154 aa)). A UVR domain is found at 622-657 (EKLIEQYEEEMKEAAKNLQFERAAELRDIIKDLKEN).

It belongs to the UvrB family. In terms of assembly, forms a heterotetramer with UvrA during the search for lesions. Interacts with UvrC in an incision complex.

It localises to the cytoplasm. In terms of biological role, the UvrABC repair system catalyzes the recognition and processing of DNA lesions. A damage recognition complex composed of 2 UvrA and 2 UvrB subunits scans DNA for abnormalities. Upon binding of the UvrA(2)B(2) complex to a putative damaged site, the DNA wraps around one UvrB monomer. DNA wrap is dependent on ATP binding by UvrB and probably causes local melting of the DNA helix, facilitating insertion of UvrB beta-hairpin between the DNA strands. Then UvrB probes one DNA strand for the presence of a lesion. If a lesion is found the UvrA subunits dissociate and the UvrB-DNA preincision complex is formed. This complex is subsequently bound by UvrC and the second UvrB is released. If no lesion is found, the DNA wraps around the other UvrB subunit that will check the other stand for damage. This chain is UvrABC system protein B, found in Clostridium perfringens (strain ATCC 13124 / DSM 756 / JCM 1290 / NCIMB 6125 / NCTC 8237 / Type A).